The sequence spans 887 residues: ABC transporter A family member 10 (887 aa).

A run of 7 helical transmembrane segments spans residues 38 to 58, 198 to 218, 245 to 265, 277 to 297, 309 to 329, 335 to 355, and 376 to 396; these read GIQY…VITL, YLYV…LLVT, IIIV…VVLY, VMLF…GIIL, AISS…QFYL, SSWL…EFLY, and ISFL…WYIT. The span at 443-469 shows a compositional bias: low complexity; sequence NNCNNNNTSPSSSSSSQSSPLNKPLLS. The disordered stretch occupies residues 443–474; sequence NNCNNNNTSPSSSSSSQSSPLNKPLLSGDSDD. Positions 481–728 constitute an ABC transporter domain; that stretch reads IRLVNLKKTY…FNLGYILTIV (248 aa). 519–526 provides a ligand contact to ATP; it reads GQNGSGKT. Over residues 774 to 797 the composition is skewed to low complexity; that stretch reads NNNNNENNSNNSDGSSSSSDSSSS. A disordered region spans residues 774-799; the sequence is NNNNNENNSNNSDGSSSSSDSSSSKD.

The protein belongs to the ABC transporter superfamily. ABCA family.

The protein resides in the membrane. The chain is ABC transporter A family member 10 (abcA10) from Dictyostelium discoideum (Social amoeba).